The following is a 127-amino-acid chain: Small ribosomal subunit protein uS11 (127 aa).

This sequence belongs to the universal ribosomal protein uS11 family. In terms of assembly, part of the 30S ribosomal subunit. Interacts with proteins S7 and S18. Binds to IF-3.

Its function is as follows. Located on the platform of the 30S subunit, it bridges several disparate RNA helices of the 16S rRNA. Forms part of the Shine-Dalgarno cleft in the 70S ribosome. This Rickettsia canadensis (strain McKiel) protein is Small ribosomal subunit protein uS11.